The sequence spans 492 residues: Endoglycoceramidase I (492 aa).

Residues 1–14 (MRKTVVAFAAAIAA) form the signal peptide. A lipid anchor (N-palmitoyl cysteine) is attached at C15. C15 carries S-diacylglycerol cysteine lipidation. Substrate-binding positions include K61, D62, 131–133 (HQD), and 213–214 (NE). E214 acts as the Proton donor in catalysis. A disulfide bridge links C224 with C229. Residues N265, Q298, and Y302 each coordinate substrate. The cysteines at positions 294 and 313 are disulfide-linked. The Nucleophile role is filled by E339. W365 lines the substrate pocket. The tract at residues 467-492 (NRPGSAGAEVPDGPIETSSSGSSGSS) is disordered.

This sequence belongs to the glycosyl hydrolase 5 (cellulase A) family.

The protein resides in the secreted. The protein localises to the membrane. The catalysed reaction is an oligoglycosyl-(1-&gt;4)-beta-D-glucosyl-(1&lt;-&gt;1)-ceramide + H2O = an oligoglycosyl-(1-&gt;4)-D-glucose + an N-acyl-sphingoid base. It carries out the reaction a ganglioside GM3 + H2O = N-acetyl-alpha-neuraminosyl-(2-&gt;3)-beta-D-galactosyl-(1-&gt;4)-D-glucose + an N-acyl-sphingoid base. It catalyses the reaction a ganglioside GM1 + H2O = beta-D-Gal-(1-&gt;3)-beta-D-GalNAc-(1-&gt;4)-[alpha-Neu5Ac-(2-&gt;3)]-beta-D-Gal-(1-&gt;4)-D-Glc + an N-acyl-sphingoid base. The enzyme catalyses a ganglioside Fuc-GM1 + H2O = alpha-Fuc-(1-&gt;2)-beta-Gal-(1-&gt;3)-beta-GalNAc-(1-&gt;4)-[alpha-Neu5Ac-(2-&gt;3)]-beta-Gal-(1-&gt;4)-Glc + an N-acyl-sphingoid base. The catalysed reaction is a beta-D-galactosyl-(1-&gt;4)-beta-D-glucosyl-(1&lt;-&gt;1)-ceramide + H2O = lactose + an N-acyl-sphingoid base. Its function is as follows. Hydrolyzes glycosphingolipids; exhibits broad substrate specificity including monosialodihexosylganglioside (GM3), monosialotetrahexosylganglioside (GM1), fucosyl-GM1, lactosylceramide, globotriosylceramide, globotetraosylceramide, ganglioside GD1a, and ganglioside GD1b. No activity towards glucosylceramide and galactosylceramide. In Rhodococcus hoagii (strain 103S) (Rhodococcus equi), this protein is Endoglycoceramidase I.